The following is a 137-amino-acid chain: Large ribosomal subunit protein uL16 (137 aa).

It belongs to the universal ribosomal protein uL16 family. Part of the 50S ribosomal subunit.

Its function is as follows. Binds 23S rRNA and is also seen to make contacts with the A and possibly P site tRNAs. This Methylocella silvestris (strain DSM 15510 / CIP 108128 / LMG 27833 / NCIMB 13906 / BL2) protein is Large ribosomal subunit protein uL16.